The primary structure comprises 193 residues: Signal peptidase I (193 aa).

Topologically, residues 1–25 are cytoplasmic; sequence MTEEQKPTSEKSVKRKSNTYWEWGK. The chain crosses the membrane as a helical span at residues 26–42; the sequence is AIIIAVALALLIRHFLF. Residues 43–193 lie on the Extracellular side of the membrane; that stretch reads EPYLVEGSSM…FPFHDMRQTK (151 aa). Active-site residues include Ser51 and Lys93.

The protein belongs to the peptidase S26 family.

It is found in the cell membrane. The enzyme catalyses Cleavage of hydrophobic, N-terminal signal or leader sequences from secreted and periplasmic proteins.. In Bacillus amyloliquefaciens (Bacillus velezensis), this protein is Signal peptidase I (sipS2).